We begin with the raw amino-acid sequence, 330 residues long: Glycerol-3-phosphate dehydrogenase [NAD(P)+] (330 aa).

Positions 10, 11, 31, and 105 each coordinate NADPH. Lys105, Gly135, and Ser137 together coordinate sn-glycerol 3-phosphate. Ala139 lines the NADPH pocket. Residues Lys190, Asp243, Ser253, Arg254, and Asn255 each coordinate sn-glycerol 3-phosphate. The active-site Proton acceptor is Lys190. Arg254 contributes to the NADPH binding site. NADPH contacts are provided by Val278 and Glu280.

It belongs to the NAD-dependent glycerol-3-phosphate dehydrogenase family.

Its subcellular location is the cytoplasm. It carries out the reaction sn-glycerol 3-phosphate + NAD(+) = dihydroxyacetone phosphate + NADH + H(+). The catalysed reaction is sn-glycerol 3-phosphate + NADP(+) = dihydroxyacetone phosphate + NADPH + H(+). It functions in the pathway membrane lipid metabolism; glycerophospholipid metabolism. Functionally, catalyzes the reduction of the glycolytic intermediate dihydroxyacetone phosphate (DHAP) to sn-glycerol 3-phosphate (G3P), the key precursor for phospholipid synthesis. This chain is Glycerol-3-phosphate dehydrogenase [NAD(P)+], found in Nitratidesulfovibrio vulgaris (strain DP4) (Desulfovibrio vulgaris).